The primary structure comprises 82 residues: RNA-binding protein GWCH70_0105 (82 aa).

This sequence belongs to the eukaryotic ribosomal protein eL8 family.

The chain is RNA-binding protein GWCH70_0105 from Geobacillus sp. (strain WCH70).